The sequence spans 303 residues: Mitochondrial carrier homolog 2 (303 aa).

The residue at position 2 (alanine 2) is an N-acetylalanine. The Mitochondrial intermembrane portion of the chain corresponds to 2 to 15; the sequence is ADAASQVLLGSGLT. 2 Solcar repeats span residues 2 to 98 and 118 to 206; these read ADAA…YQES and DHVI…VNTY. Residues 16–36 traverse the membrane as a helical segment; it reads ILSQPLMYVKVLIQVGYEPLP. The Cytoplasmic segment spans residues 37 to 77; the sequence is PTIGRNIFGRQVCQLPGLFSYAQHIASIDGRRGLFTGLTPR. The chain crosses the membrane as a helical span at residues 78-92; it reads LCSGVLGTVVHGKVL. The Mitochondrial intermembrane portion of the chain corresponds to 93 to 135; the sequence is QHYQESDKGEELGPGNVQKEVSSSFDHVIKETTREMIARSAAT. The chain crosses the membrane as a helical span at residues 136-156; it reads LITHPFHVITLRSMVQFIGRE. Over 157 to 180 the chain is Cytoplasmic; that stretch reads SKYCGLCDSIITIYREEGILGFFA. Residues 181-199 traverse the membrane as a helical segment; that stretch reads GLVPRLLGDILSLWLCNSL. Residues 200–231 lie on the Mitochondrial intermembrane side of the membrane; that stretch reads AYLVNTYALDSGVSTMNEMKSYSQAVTGFFAS. The helical transmembrane segment at 232–252 threads the bilayer; that stretch reads MLTYPFVLVSNLMAVNNCGLA. At 253–280 the chain is on the cytoplasmic side; that stretch reads GGCPPYSPIYTSWIDCWCMLQKEGNMSR. Residues 281–303 traverse the membrane as a helical segment; the sequence is GNSLFFRKVPFGKTYCCDLKMLI.

This sequence belongs to the mitochondrial carrier (TC 2.A.29) family. Interacts with p15BID.

Its subcellular location is the mitochondrion outer membrane. In terms of biological role, protein insertase that mediates insertion of transmembrane proteins into the mitochondrial outer membrane. Catalyzes insertion of proteins with alpha-helical transmembrane regions, such as signal-anchored, tail-anchored and multi-pass membrane proteins. Does not mediate insertion of beta-barrel transmembrane proteins. Also acts as a receptor for the truncated form of pro-apoptotic BH3-interacting domain death agonist (p15 BID) and has therefore a critical function in apoptosis. Regulates the quiescence/cycling of hematopoietic stem cells (HSCs). Acts as a regulator of mitochondrial fusion, essential for the naive-to-primed interconversion of embryonic stem cells (ESCs). Acts as a regulator of lipid homeostasis and has a regulatory role in adipocyte differentiation and biology. This Homo sapiens (Human) protein is Mitochondrial carrier homolog 2.